The chain runs to 568 residues: Chaperonin homolog Hsp-60, mitochondrial (568 aa).

It belongs to the chaperonin (HSP60) family.

The protein resides in the mitochondrion matrix. Its function is as follows. Implicated in mitochondrial protein import and macromolecular assembly. May facilitate the correct folding of imported proteins. May also prevent misfolding and promote the refolding and proper assembly of unfolded polypeptides generated under stress conditions in the mitochondrial matrix. The chain is Chaperonin homolog Hsp-60, mitochondrial (hsp-60) from Caenorhabditis elegans.